Reading from the N-terminus, the 123-residue chain is Defensin beta 118 (123 aa).

An N-terminal signal peptide occupies residues Met1 to Pro19. 3 cysteine pairs are disulfide-bonded: Cys27–Cys54, Cys34–Cys48, and Cys38–Cys55. Positions Val65–Ser123 are excised as a propeptide. The segment covering Lys100 to Arg110 has biased composition (basic and acidic residues). The interval Lys100–Ser123 is disordered. Residues Thr112 to Ser123 are compositionally biased toward polar residues.

This sequence belongs to the beta-defensin family. The three-dimensional structure formed by the three intramolecular disulfide bridges is indispensable for antimicrobial activity.

It is found in the secreted. In terms of biological role, host defense peptide that exhibits antimicrobial activity against both Gram-negative bacteria, such as E.coli and S.typhimurium, and Gram-positive bacteria, such as S.aureus and B.subtilis. Inhibits cell adhesion of E.coli on intestinal epithelial enterocytes. Causes rapid permeabilization of both the outer and inner membrane of E.coli, leading to morphological alterations on the bacterial surface. Binds to bacterial lipopolysaccharides (LPS) with high affinity, and may thereby be involved in immunoregulation through LPS neutralization. May contribute to epididymal innate immunity and protect the sperm against attack by microorganisms. This Gorilla gorilla gorilla (Western lowland gorilla) protein is Defensin beta 118 (DEFB118).